A 218-amino-acid polypeptide reads, in one-letter code: Probable transaldolase (218 aa).

Lys83 functions as the Schiff-base intermediate with substrate in the catalytic mechanism.

The protein belongs to the transaldolase family. Type 3B subfamily.

It localises to the cytoplasm. The enzyme catalyses D-sedoheptulose 7-phosphate + D-glyceraldehyde 3-phosphate = D-erythrose 4-phosphate + beta-D-fructose 6-phosphate. The protein operates within carbohydrate degradation; pentose phosphate pathway; D-glyceraldehyde 3-phosphate and beta-D-fructose 6-phosphate from D-ribose 5-phosphate and D-xylulose 5-phosphate (non-oxidative stage): step 2/3. Transaldolase is important for the balance of metabolites in the pentose-phosphate pathway. This chain is Probable transaldolase, found in Parvibaculum lavamentivorans (strain DS-1 / DSM 13023 / NCIMB 13966).